The chain runs to 126 residues: C-type natriuretic peptide (126 aa).

Positions 1–23 (MHLSQLIACALLLALLSLRPSEA) are cleaved as a signal peptide. Residues 20 to 73 (PSEAKPGTPPKVPRTPPGEELADSQAAGGNQKKGDKTPGSGGANLKGDRSRLLR) are disordered. Residues 24–73 (KPGTPPKVPRTPPGEELADSQAAGGNQKKGDKTPGSGGANLKGDRSRLLR) constitute a propeptide that is removed on maturation. Residues 26–35 (GTPPKVPRTP) show a composition bias toward pro residues. An intrachain disulfide couples Cys110 to Cys126.

It belongs to the natriuretic peptide family. Post-translationally, degraded by IDE (in vitro).

It localises to the secreted. Its function is as follows. Hormone which plays a role in endochondral ossification through regulation of cartilaginous growth plate chondrocytes proliferation and differentiation. May also be vasoactive and natriuretic. Acts by specifically binding and stimulating NPR2 to produce cGMP. Binds the clearance receptor NPR3. The sequence is that of C-type natriuretic peptide (Nppc) from Mus musculus (Mouse).